We begin with the raw amino-acid sequence, 370 residues long: Pituitary-specific positive transcription factor 1 (370 aa).

Positions 5–13 (AFASSDNFV) match the 9aaTAD motif. One can recognise a POU-specific domain in the interval 202 to 276 (MDSPEIRELE…ILSKWLEEAE (75 aa)). A DNA-binding region (homeobox) is located at residues 292–351 (KRKRRTTISIAAKEALERHFGEQSKPSSQEIMRMAEGLNLEKEVVRVWFCNRRQREKRVK).

Belongs to the POU transcription factor family. Class-1 subfamily. In terms of tissue distribution, pituitary gland.

It localises to the nucleus. Transcription factor that activates growth hormone and prolactin genes. Specifically binds to the consensus sequence 5'-TAAAT-3'. This chain is Pituitary-specific positive transcription factor 1 (POU1F1), found in Meleagris gallopavo (Wild turkey).